Consider the following 277-residue polypeptide: Undecaprenyl-diphosphatase (277 aa).

6 helical membrane passes run 88–108, 117–137, 157–179, 191–211, 227–247, and 255–275; these read MGWL…LFQD, MWIV…ADAV, FAQA…AGLL, SFLL…YKVV, LATV…LKFV, and FVWY…FGVI.

It belongs to the UppP family.

The protein localises to the cell membrane. The enzyme catalyses di-trans,octa-cis-undecaprenyl diphosphate + H2O = di-trans,octa-cis-undecaprenyl phosphate + phosphate + H(+). Its function is as follows. Catalyzes the dephosphorylation of undecaprenyl diphosphate (UPP). Confers resistance to bacitracin. The chain is Undecaprenyl-diphosphatase from Pseudarthrobacter chlorophenolicus (strain ATCC 700700 / DSM 12829 / CIP 107037 / JCM 12360 / KCTC 9906 / NCIMB 13794 / A6) (Arthrobacter chlorophenolicus).